Consider the following 418-residue polypeptide: Vasopressin V1a receptor (418 aa).

The disordered stretch occupies residues 1–43 (MRLSAGPDAGPSGNSSPWWPLATGAGNTSREAEALGEGNGPPR). Residues 1-52 (MRLSAGPDAGPSGNSSPWWPLATGAGNTSREAEALGEGNGPPRDVRNEELAK) lie on the Extracellular side of the membrane. Asparagine 27 is a glycosylation site (N-linked (GlcNAc...) asparagine). Residues 53–76 (LEIAVLAVTFAVAVLGNSSVLLAL) traverse the membrane as a helical segment. At 77 to 88 (HRTPRKTSRMHL) the chain is on the cytoplasmic side. A helical membrane pass occupies residues 89-110 (FIRHLSLADLAVAFFQVLPQMC). The Extracellular segment spans residues 111–125 (WDITYRFRGPDWLCR). Cysteines 124 and 203 form a disulfide. The chain crosses the membrane as a helical span at residues 126-147 (VVKHLQVFGMFASAYMLVVMTA). The Cytoplasmic segment spans residues 148–168 (DRYIAVCHPLKTLQQPARRSR). The chain crosses the membrane as a helical span at residues 169 to 190 (LMIAAAWVLSFVLSTPQYFVFS). Topologically, residues 191 to 218 (MIEVNNVTKARDCWATFIQPWGSRAYVT) are extracellular. Residue asparagine 196 is glycosylated (N-linked (GlcNAc...) asparagine). Residues 219–239 (WMTGGIFVAPVVILGTCYGFI) traverse the membrane as a helical segment. Residues 240–293 (CYNIWCNVRGKTASRQSKGAEQAGVAFQKGFLLAPCVSSVKSISRAKIRTVKMT) lie on the Cytoplasmic side of the membrane. A helical transmembrane segment spans residues 294–313 (FVIVTAYIVCWAPFFIIQMW). Residues 314 to 331 (SVWDPMSVWTESENPTIT) are Extracellular-facing. A helical transmembrane segment spans residues 332-351 (ITALLGSLNSCCNPWIYMFF). At 352-418 (SGHLLQDCVQ…KSIKFIPVST (67 aa)) the chain is on the cytoplasmic side. 2 S-palmitoyl cysteine lipidation sites follow: cysteine 365 and cysteine 366. Positions 377 to 410 (DTDSMSRRQTFYSNNRSPTNSTGMWKDSPKSSKS) are disordered. Residues 383 to 399 (RRQTFYSNNRSPTNSTG) show a composition bias toward polar residues. At serine 404 the chain carries Phosphoserine.

The protein belongs to the G-protein coupled receptor 1 family. Vasopressin/oxytocin receptor subfamily.

It localises to the cell membrane. Functionally, receptor for arginine vasopressin. The activity of this receptor is mediated by G proteins which activate a phosphatidyl-inositol-calcium second messenger system. Has been involved in social behaviors, including affiliation and attachment. The sequence is that of Vasopressin V1a receptor (AVPR1A) from Homo sapiens (Human).